A 238-amino-acid polypeptide reads, in one-letter code: Probable transcriptional regulatory protein SPD_1725 (238 aa).

This sequence belongs to the TACO1 family. YeeN subfamily.

Its subcellular location is the cytoplasm. This is Probable transcriptional regulatory protein SPD_1725 from Streptococcus pneumoniae serotype 2 (strain D39 / NCTC 7466).